The following is a 299-amino-acid chain: CDP-abequose synthase (299 aa).

Residue T117 coordinates substrate. The active-site Proton acceptor is Y134.

It belongs to the NAD(P)-dependent epimerase/dehydratase family.

It catalyses the reaction CDP-alpha-D-abequose + NADP(+) = CDP-4-dehydro-3,6-dideoxy-alpha-D-glucose + NADPH + H(+). It participates in bacterial outer membrane biogenesis; LPS O-antigen biosynthesis. This chain is CDP-abequose synthase (rfbJ), found in Salmonella typhimurium (strain LT2 / SGSC1412 / ATCC 700720).